The sequence spans 1140 residues: DNA damage-binding protein 1 (1140 aa).

S2 carries the post-translational modification N-acetylserine. The interaction with CDT1 stretch occupies residues 2–768 (SYNYVVTAQK…QALSSSVSSS (767 aa)). Residues 13-356 (TAVNGCVTGH…VVAMETFTNL (344 aa)) are WD repeat beta-propeller A. Residues 392–708 (NGIGIHEHAS…LTIGTIDEIQ (317 aa)) are WD repeat beta-propeller B; Interaction with CUL4A. The tract at residues 709-1043 (KLHIRTVPLY…NGMIGLVTSL (335 aa)) is WD repeat beta-propeller C. The interaction with CDT1 and CUL4A stretch occupies residues 771 to 1140 (FSSSTAPHET…KVVEELTRIH (370 aa)). Position 1067 is an N6-acetyllysine (K1067). Residue K1121 forms a Glycyl lysine isopeptide (Lys-Gly) (interchain with G-Cter in SUMO2) linkage. T1125 bears the Phosphothreonine mark.

This sequence belongs to the DDB1 family. In terms of assembly, component of the UV-DDB complex which includes DDB1 and DDB2; the heterodimer dimerizes to give rise to a heterotetramer when bound to damaged DNA. The UV-DDB complex interacts with monoubiquitinated histone H2A and binds to XPC via the DDB2 subunit. Component of numerous DCX (DDB1-CUL4-X-box) E3 ubiquitin-protein ligase complexes which consist of a core of DDB1, CUL4A or CUL4B and RBX1. DDB1 may recruit specific substrate targeting subunits to the DCX complex. These substrate targeting subunits are generally known as DCAF (DDB1- and CUL4-associated factor) or CDW (CUL4-DDB1-associated WD40-repeat) proteins. Interacts with AMBRA1, ATG16L1, BTRC, CRBN, DCAF1, DCAF4, DCAF5, DCAF6, DCAF7, DCAF8, DCAF9, DCAF10, DCAF11, DCAF12, DCAF15, DCAF16, DCAF17, DDA1, DET1, DTL, ERCC8, FBXW5, FBXW8, GRWD1, KATNB1, NLE1, NUP43, PAFAH1B1, PHIP, PWP1, RBBP4, RBBP5, RBBP7, COP1, SNRNP40, DCAF1, WDR5, WDR5B, WDR12, WDR26, WDR39, WDR42, WDR53, WDR59, WDR61, WSB1, WSB2, LRWD1 and WDTC1. DCX complexes may associate with the COP9 signalosome, and this inhibits the E3 ubiquitin-protein ligase activity of the complex. Interacts with NF2, TSC1 and TSC2. Interacts with AGO1 and AGO2. Associates with the E3 ligase complex containing DYRK2, EDD/UBR5, DDB1 and DCAF1 proteins (EDVP complex). Interacts directly with DYRK2. DCX(DTL) complex interacts with FBXO11; does not ubiquitinate and degradate FBXO11. Interacts with TRPC4AP. Interacts with CRY1 and CRY2. The DDB1-CUL4A complex interacts with CRY1. May also interact with DCUN1D1, DCUN1D2, DCUN1D3 and DCUN1D5. Component of the DCX(DCAF13) E3 ubiquitin ligase complex, at least composed of CUL4 (CUL4A or CUL4B), DDB1, DCAF13 and RBX1. Interacts with DCAF13 (via WD40 domain). As to quaternary structure, (Microbial infection) Interacts with Simian virus 5 protein V. (Microbial infection) Interacts with hepatitis B virus protein HBX; the viral protein contains a short helical motif that competes for the same binding site as the N-terminal helical motif found in endogenous DCAF proteins. In terms of assembly, (Microbial infection) Interacts with human cytomegalovirus protein UL145; this interaction promotes STAT2 degradation. As to quaternary structure, (Microbial infection) Interacts with human cytomegalovirus protein RL1; this interaction allows RL1 to recruit the cullin4-RING E3 ubiquitin ligase (CRL4) complex and promote SLN11 degradation. Phosphorylated by ABL1. In terms of processing, ubiquitinated by CUL4A. Subsequently degraded by ubiquitin-dependent proteolysis. Post-translationally, acetylated, promoting interaction with CUL4 (CUL4A or CUL4B) and subsequent formation of DCX (DDB1-CUL4-X-box) E3 ubiquitin-protein ligase complexes. Deacetylation by SIRT7 impairs the interaction with CUL4 (CUL4A or CUL4B) and formation of DCX (DDB1-CUL4-X-box) E3 ubiquitin-protein ligase complexes.

The protein resides in the cytoplasm. It is found in the nucleus. It functions in the pathway protein modification; protein ubiquitination. Functionally, protein, which is both involved in DNA repair and protein ubiquitination, as part of the UV-DDB complex and DCX (DDB1-CUL4-X-box) complexes, respectively. Core component of the UV-DDB complex (UV-damaged DNA-binding protein complex), a complex that recognizes UV-induced DNA damage and recruit proteins of the nucleotide excision repair pathway (the NER pathway) to initiate DNA repair. The UV-DDB complex preferentially binds to cyclobutane pyrimidine dimers (CPD), 6-4 photoproducts (6-4 PP), apurinic sites and short mismatches. Also functions as a component of numerous distinct DCX (DDB1-CUL4-X-box) E3 ubiquitin-protein ligase complexes which mediate the ubiquitination and subsequent proteasomal degradation of target proteins. The functional specificity of the DCX E3 ubiquitin-protein ligase complex is determined by the variable substrate recognition component recruited by DDB1. DCX(DDB2) (also known as DDB1-CUL4-ROC1, CUL4-DDB-ROC1 and CUL4-DDB-RBX1) may ubiquitinate histone H2A, histone H3 and histone H4 at sites of UV-induced DNA damage. The ubiquitination of histones may facilitate their removal from the nucleosome and promote subsequent DNA repair. DCX(DDB2) also ubiquitinates XPC, which may enhance DNA-binding by XPC and promote NER. DCX(DTL) plays a role in PCNA-dependent polyubiquitination of CDT1 and MDM2-dependent ubiquitination of TP53 in response to radiation-induced DNA damage and during DNA replication. DCX(ERCC8) (the CSA complex) plays a role in transcription-coupled repair (TCR). The DDB1-CUL4A-DTL E3 ligase complex regulates the circadian clock function by mediating the ubiquitination and degradation of CRY1. DDB1-mediated CRY1 degradation promotes FOXO1 protein stability and FOXO1-mediated gluconeogenesis in the liver. By acting on TET dioxygenses, essential for oocyte maintenance at the primordial follicle stage, hence essential for female fertility. Maternal factor required for proper zygotic genome activation and genome reprogramming. This Homo sapiens (Human) protein is DNA damage-binding protein 1 (DDB1).